A 606-amino-acid polypeptide reads, in one-letter code: Aspartate--tRNA(Asp/Asn) ligase (606 aa).

An L-aspartate-binding site is contributed by Glu172. The tract at residues 196–199 is aspartate; the sequence is QLFK. Arg218 lines the L-aspartate pocket. Residues 218-220 and Gln227 each bind ATP; that span reads RDE. His448 contributes to the L-aspartate binding site. Glu482 provides a ligand contact to ATP. Position 489 (Arg489) interacts with L-aspartate. 534–537 serves as a coordination point for ATP; sequence GWDR.

It belongs to the class-II aminoacyl-tRNA synthetase family. Type 1 subfamily. In terms of assembly, homodimer.

It is found in the cytoplasm. The enzyme catalyses tRNA(Asx) + L-aspartate + ATP = L-aspartyl-tRNA(Asx) + AMP + diphosphate. Its function is as follows. Aspartyl-tRNA synthetase with relaxed tRNA specificity since it is able to aspartylate not only its cognate tRNA(Asp) but also tRNA(Asn). Reaction proceeds in two steps: L-aspartate is first activated by ATP to form Asp-AMP and then transferred to the acceptor end of tRNA(Asp/Asn). The polypeptide is Aspartate--tRNA(Asp/Asn) ligase (Saccharopolyspora erythraea (strain ATCC 11635 / DSM 40517 / JCM 4748 / NBRC 13426 / NCIMB 8594 / NRRL 2338)).